A 209-amino-acid chain; its full sequence is J domain-containing protein spf31 (209 aa).

Positions 31–96 (NAYDVLDILP…KIRESLDSAY (66 aa)) constitute a J domain. 2 disordered regions span residues 149-175 (ANQQ…EKVW) and 187-209 (QDFL…RVLG). Residues 154–175 (EQARQDEIARERKRRVESEKVW) are compositionally biased toward basic and acidic residues. A compositionally biased stretch (basic residues) spans 192–209 (KTKKNNLKKKNKKPRVLG).

This is J domain-containing protein spf31 (spf31) from Schizosaccharomyces pombe (strain 972 / ATCC 24843) (Fission yeast).